Reading from the N-terminus, the 238-residue chain is Purine nucleoside phosphorylase DeoD-type (238 aa).

Residue H4 coordinates a purine D-ribonucleoside. Residues G20, R24, R43, and 87 to 90 (RVGS) contribute to the phosphate site. A purine D-ribonucleoside-binding positions include 179 to 181 (EME) and 203 to 204 (SD). Residue D204 is the Proton donor of the active site.

Belongs to the PNP/UDP phosphorylase family. In terms of assembly, homohexamer; trimer of homodimers.

The catalysed reaction is a purine D-ribonucleoside + phosphate = a purine nucleobase + alpha-D-ribose 1-phosphate. It catalyses the reaction a purine 2'-deoxy-D-ribonucleoside + phosphate = a purine nucleobase + 2-deoxy-alpha-D-ribose 1-phosphate. Catalyzes the reversible phosphorolytic breakdown of the N-glycosidic bond in the beta-(deoxy)ribonucleoside molecules, with the formation of the corresponding free purine bases and pentose-1-phosphate. The protein is Purine nucleoside phosphorylase DeoD-type of Histophilus somni (strain 2336) (Haemophilus somnus).